Here is a 604-residue protein sequence, read N- to C-terminus: Beta-(1--&gt;2)glucan export ATP-binding/permease protein NdvA (604 aa).

In terms of domain architecture, ABC transmembrane type-1 spans 21–311; sequence GWILAFANLL…VVSFINSVFM (291 aa). A run of 6 helical transmembrane segments spans residues 22–42, 68–88, 146–166, 168–188, 238–258, and 285–305; these read WILA…PVLF, LLGA…AVAL, EHFA…YINW, LAIL…LVVH, LLAL…ITRA, and IVMF…VVSF. Residues 345 to 579 enclose the ABC transporter domain; sequence VEFKDVSFSY…QGHFAALARA (235 aa). 378-385 is a binding site for ATP; it reads GATGAGKS.

This sequence belongs to the ABC transporter superfamily. Beta-(1--&gt;2)glucan exporter (TC 3.A.1.108.1) family. Homodimer.

The protein resides in the cell inner membrane. It catalyses the reaction [(1-&gt;2)-beta-D-glucosyl](n)(in) + ATP + H2O = [(1-&gt;2)-beta-D-glucosyl](n)(out) + ADP + phosphate + H(+). Involved in beta-(1--&gt;2)glucan export. Transmembrane domains (TMD) form a pore in the inner membrane and the ATP-binding domain (NBD) is responsible for energy generation. In Rhodopseudomonas palustris (strain BisB18), this protein is Beta-(1--&gt;2)glucan export ATP-binding/permease protein NdvA.